The following is a 154-amino-acid chain: MRCPHCHKNGSRVVDSRPSEDGSFIRRRRECIHCGFRFTTFERYEETPLLVIKKDGTRQEFSRQKILNGIVRSAEKRPVSMERLTKIADKVEKQIRSIGESEVSSQIIGKFVMNELKGVDEIAYIRFASVYRQFKDVDAFMSELETMMKAEHKK.

A zinc finger spans residues 3–34; the sequence is CPHCHKNGSRVVDSRPSEDGSFIRRRRECIHC. The 91-residue stretch at 49 to 139 folds into the ATP-cone domain; that stretch reads LLVIKKDGTR…VYRQFKDVDA (91 aa).

It belongs to the NrdR family. Requires Zn(2+) as cofactor.

Negatively regulates transcription of bacterial ribonucleotide reductase nrd genes and operons by binding to NrdR-boxes. This is Transcriptional repressor NrdR from Limosilactobacillus reuteri (strain DSM 20016) (Lactobacillus reuteri).